We begin with the raw amino-acid sequence, 488 residues long: Glutamyl-tRNA(Gln) amidotransferase subunit A (488 aa).

Catalysis depends on charge relay system residues Lys77 and Ser152. Ser176 (acyl-ester intermediate) is an active-site residue.

It belongs to the amidase family. GatA subfamily. Heterotrimer of A, B and C subunits.

It carries out the reaction L-glutamyl-tRNA(Gln) + L-glutamine + ATP + H2O = L-glutaminyl-tRNA(Gln) + L-glutamate + ADP + phosphate + H(+). Functionally, allows the formation of correctly charged Gln-tRNA(Gln) through the transamidation of misacylated Glu-tRNA(Gln) in organisms which lack glutaminyl-tRNA synthetase. The reaction takes place in the presence of glutamine and ATP through an activated gamma-phospho-Glu-tRNA(Gln). The sequence is that of Glutamyl-tRNA(Gln) amidotransferase subunit A from Streptococcus pyogenes serotype M18 (strain MGAS8232).